Here is a 173-residue protein sequence, read N- to C-terminus: Inorganic pyrophosphatase (173 aa).

Positions 26, 40, and 52 each coordinate substrate. The Mg(2+) site is built by D62, D67, and D99. Y138 serves as a coordination point for substrate.

It belongs to the PPase family. As to quaternary structure, homohexamer. Mg(2+) serves as cofactor.

The protein localises to the cytoplasm. It carries out the reaction diphosphate + H2O = 2 phosphate + H(+). Functionally, catalyzes the hydrolysis of inorganic pyrophosphate (PPi) forming two phosphate ions. The polypeptide is Inorganic pyrophosphatase (Sulfolobus acidocaldarius (strain ATCC 33909 / DSM 639 / JCM 8929 / NBRC 15157 / NCIMB 11770)).